Consider the following 1474-residue polypeptide: Adhesion G protein-coupled receptor L1 (1474 aa).

The N-terminal stretch at 1–24 is a signal peptide; that stretch reads MARLAAVLWNLCVTAVLVTSATQG. The Extracellular segment spans residues 25 to 858; it reads LSRAGLPFGL…EIYQGRINEL (834 aa). An SUEL-type lectin domain is found at 40–129; it reads ACEGYPIELR…KYLEVQYDCV (90 aa). 5 cysteine pairs are disulfide-bonded: C41–C71, C50–C128, C83–C115, C96–C102, and C140–C322. Residue E42 participates in alpha-L-rhamnose binding. N-linked (GlcNAc...) asparagine glycosylation occurs at N98. An alpha-L-rhamnose-binding site is contributed by 117–120; the sequence is GTYK. An Olfactomedin-like domain is found at 139 to 398; sequence VCPGTLQKVL…VVRYSLEFGP (260 aa). The segment at 400–434 is disordered; the sequence is DPSAGPATSPPLSTTTTARPTPLTSTASPAATTPL. A compositionally biased stretch (low complexity) spans 405 to 434; that stretch reads PATSPPLSTTTTARPTPLTSTASPAATTPL. 2 disulfides stabilise this stretch: C480/C515 and C503/C532. N531, N640, N742, N801, N806, and N827 each carry an N-linked (GlcNAc...) asparagine glycan. A GAIN-B domain is found at 669–851; sequence PARFLAAKEN…AVLMAHREIY (183 aa). 2 disulfides stabilise this stretch: C802–C833 and C821–C835. Residues 802 to 851 form a GPS region; that stretch reads CSFWNYSERSMLGYWSTQGCRLVESNKTHTTCACSHLTNFAVLMAHREIY. Residues 859–879 form a helical membrane-spanning segment; that stretch reads LLSVITWVGIVISLVCLAICI. Over 880–893 the chain is Cytoplasmic; that stretch reads STFCFLRGLQTDRN. A helical transmembrane segment spans residues 894–914; it reads TIHKNLCINLFLAELLFLVGI. At 915 to 920 the chain is on the extracellular side; that stretch reads DKTQYE. The chain crosses the membrane as a helical span at residues 921-941; the sequence is IACPIFAGLLHYFFLAAFSWL. Residues 942–964 are Cytoplasmic-facing; that stretch reads CLEGVHLYLLLVEVFESEYSRTK. The chain crosses the membrane as a helical span at residues 965–985; it reads YYYLGGYCFPALVVGIAAAID. Residues 986 to 1002 are Extracellular-facing; the sequence is YRSYGTEKACWLRVDNY. Residues 1003–1023 traverse the membrane as a helical segment; the sequence is FIWSFIGPVSFVIVVNLVFLM. Residues 1024–1050 are Cytoplasmic-facing; the sequence is VTLHKMIRSSSVLKPDSSRLDNIKSWA. The helical transmembrane segment at 1051-1071 threads the bilayer; sequence LGAIALLFLLGLTWAFGLLFI. Over 1072 to 1075 the chain is Extracellular; that stretch reads NKES. The chain crosses the membrane as a helical span at residues 1076 to 1096; it reads VVMAYLFTTFNAFQGVFIFVF. The Cytoplasmic portion of the chain corresponds to 1097-1474; sequence HCALQKKVHK…DGQMQLVTSL (378 aa). At R1194 the chain carries Omega-N-methylarginine. Residue S1220 is modified to Phosphoserine. Disordered regions lie at residues 1248-1273, 1294-1328, 1360-1429, and 1451-1474; these read FNNSYSLRSGDFPPGDGGPEPPRGRN, RGSSSAAKGPPPPEPPVPPVPGGGGEEEAGGPGGA, ESES…SRPP, and YLAAPGLEGPGPDGDGQMQLVTSL. 2 stretches are compositionally biased toward pro residues: residues 1302 to 1314 and 1408 to 1420; these read GPPPPEPPVPPVP and ALPPPPPAPPGPP. Phosphoserine is present on S1473.

It belongs to the G-protein coupled receptor 2 family. Adhesion G-protein coupled receptor (ADGR) subfamily. In terms of assembly, forms a heterodimer, consisting of a large extracellular region (p120) non-covalently linked to a seven-transmembrane moiety (p85). Interacts with syntaxin and with proteins of the SHANK family via the PDZ domain. Interacts (via extracellular domain) with FLRT1, FLRT2 and FLRT3 (via extracellular domain). In terms of processing, autoproteolytically cleaved into 2 subunits, an extracellular subunit and a seven-transmembrane subunit. This proteolytic processing takes place early in the biosynthetic pathway, either in the endoplasmic reticulum or in the early compartment of the Golgi apparatus.

It is found in the cell membrane. The protein resides in the cell projection. Its subcellular location is the axon. It localises to the growth cone. The protein localises to the synapse. It is found in the presynaptic cell membrane. The protein resides in the synaptosome. Calcium-independent receptor of high affinity for alpha-latrotoxin, an excitatory neurotoxin present in black widow spider venom which triggers massive exocytosis from neurons and neuroendocrine cells. Receptor for TENM2 that mediates heterophilic synaptic cell-cell contact and postsynaptic specialization. Receptor probably implicated in the regulation of exocytosis. The chain is Adhesion G protein-coupled receptor L1 from Homo sapiens (Human).